The primary structure comprises 125 residues: Small ribosomal subunit protein uS12c (125 aa).

It belongs to the universal ribosomal protein uS12 family. Part of the 30S ribosomal subunit.

The protein localises to the plastid. It is found in the chloroplast. Functionally, with S4 and S5 plays an important role in translational accuracy. Located at the interface of the 30S and 50S subunits. The protein is Small ribosomal subunit protein uS12c (rps12) of Nephroselmis olivacea (Green alga).